A 292-amino-acid chain; its full sequence is ER membrane protein complex subunit 2 (292 aa).

The TPR repeat unit spans residues 163-196 (AELWWYASEIYFEMGQFEKACYCLEQVLCITPFN).

Belongs to the EMC2 family. As to quaternary structure, component of the ER membrane protein complex (EMC), which is composed of EMC1, EMC2, EMC3, EMC4, EMC5 and EMC6.

It localises to the endoplasmic reticulum membrane. Functionally, part of the endoplasmic reticulum membrane protein complex (EMC) that enables the energy-independent insertion into endoplasmic reticulum membranes of newly synthesized membrane proteins. Preferentially accommodates proteins with transmembrane domains that are weakly hydrophobic or contain destabilizing features such as charged and aromatic residues. Involved in the cotranslational insertion of multi-pass membrane proteins in which stop-transfer membrane-anchor sequences become ER membrane spanning helices. It is also required for the post-translational insertion of tail-anchored/TA proteins in endoplasmic reticulum membranes. By mediating the proper cotranslational insertion of N-terminal transmembrane domains in an N-exo topology, with translocated N-terminus in the lumen of the ER, controls the topology of multi-pass membrane proteins. The sequence is that of ER membrane protein complex subunit 2 (EMC2) from Saccharomyces cerevisiae (strain ATCC 204508 / S288c) (Baker's yeast).